A 340-amino-acid chain; its full sequence is Glyceraldehyde-3-phosphate dehydrogenase, cytosolic (340 aa).

Residues 16–17 (RI), Asp38, and Arg85 each bind NAD(+). D-glyceraldehyde 3-phosphate is bound by residues 156-158 (SCT), Thr187, 216-217 (TG), and Arg239. Cys157 acts as the Nucleophile in catalysis. Asn321 is a binding site for NAD(+).

Belongs to the glyceraldehyde-3-phosphate dehydrogenase family. As to quaternary structure, homotetramer.

Its subcellular location is the cytoplasm. It carries out the reaction D-glyceraldehyde 3-phosphate + phosphate + NAD(+) = (2R)-3-phospho-glyceroyl phosphate + NADH + H(+). Its pathway is carbohydrate degradation; glycolysis; pyruvate from D-glyceraldehyde 3-phosphate: step 1/5. In terms of biological role, key enzyme in glycolysis that catalyzes the first step of the pathway by converting D-glyceraldehyde 3-phosphate (G3P) into 3-phospho-D-glyceroyl phosphate. Essential for the maintenance of cellular ATP levels and carbohydrate metabolism. The protein is Glyceraldehyde-3-phosphate dehydrogenase, cytosolic of Taxus baccata (English yew).